The following is a 1723-amino-acid chain: Homeobox protein 5 (1723 aa).

The segment covering 36–50 (QLQQPQHQPQHYQQQ) has biased composition (low complexity). Disordered regions lie at residues 36-425 (QLQQ…APGT), 440-522 (SSSP…QLQQ), 543-756 (ENIT…PPLT), 878-978 (GTIV…TGSL), 1080-1214 (IFNN…SENN), 1226-1264 (VSLG…NQQQ), 1345-1399 (IVNN…TQTS), 1456-1498 (QQQQ…STTT), and 1513-1547 (HNQQ…SRRK). Over residues 51 to 72 (DSFVSPNLDNNNPQIHVQSNNY) the composition is skewed to polar residues. Low complexity-rich tracts occupy residues 73–107 (NQNG…NNSS) and 114–212 (NNSS…NNNN). Composition is skewed to polar residues over residues 223–237 (SQPT…QHNP) and 244–257 (GQHN…MVMD). 2 stretches are compositionally biased toward low complexity: residues 258-284 (NNNN…NSNS) and 291-350 (NNNN…NNNN). Residues 300 to 351 (YNNNNNNNNNNNSNSNNNNNNNNNNNNNNNNNNNNNNNNNNNNNSNNNNNNQ) adopt a coiled-coil conformation. Residues 351 to 369 (QFSQSYDSTLGNNRFSSMM) show a composition bias toward polar residues. Composition is skewed to low complexity over residues 371–421 (QPIQ…LIGS) and 440–465 (SSSP…LSSS). Polar residues predominate over residues 483–510 (MSSITNTNLKSTQASTLKESKRSNSSPN). Composition is skewed to low complexity over residues 511–522 (LKKQMQLQQLQQ), 544–571 (NITN…ITNN), and 581–593 (NSNN…DSIN). Polar residues predominate over residues 632–655 (HISTTQQSPSLNGSTGGSMLTPTM). The span at 660–669 (LSGGGSGGGF) shows a compositional bias: gly residues. Residues 673 to 685 (ISPTGTTSNKDLQ) show a composition bias toward polar residues. 3 stretches are compositionally biased toward low complexity: residues 686-699 (SSPS…SMSM), 710-727 (SMSS…SNGL), and 734-745 (SNNMNSSGGIPT). Positions 746 to 755 (PSTPTSPPPL) are enriched in pro residues. The span at 882–928 (NPTNVNNNNINNNNNNNNNNNNNNNNNNNNNNNNNNNNTTTTTTTTT) shows a compositional bias: low complexity. Residues 929 to 945 (SANTVQSGTTSNSNLVF) are compositionally biased toward polar residues. Low complexity-rich tracts occupy residues 946 to 977 (QQTS…STGS) and 1082 to 1146 (NNNN…SINS). Polar residues-rich tracts occupy residues 1147 to 1159 (PRPS…NSSG) and 1176 to 1187 (DISTGLMASSDQ). Residues 1193-1270 (QQQQHQQLVN…NQQQILHQQL (78 aa)) adopt a coiled-coil conformation. Low complexity predominate over residues 1194–1214 (QQQHQQLVNNNNNNMNNSENN). Residues 1226–1242 (VSLGSLPTNTPSSMEIE) are compositionally biased toward polar residues. 5 stretches are compositionally biased toward low complexity: residues 1243–1264 (QQQQ…NQQQ), 1347–1384 (NNQN…TNTP), 1456–1480 (QQQQ…RSSP), 1487–1498 (SNTNTTTTSTTT), and 1518–1528 (SPISPRSPRSP). Positions 1431–1464 (VLQQQQQQQQQQQQQQQQQQQQQQQQQQQQQQET) form a coiled coil. Positions 1529–1543 (HGTSGDYNDGSQSPS) are enriched in polar residues. The homeobox DNA-binding region spans 1543–1607 (SSRRKNRFTD…NKRARSRPSP (65 aa)). The region spanning 1553 to 1588 (FQIKRMNDCFENLDKNNNGKFTSEEICQIATELGLT) is the EF-hand domain. Disordered stretches follow at residues 1598–1625 (NKRA…GNNS) and 1661–1723 (LHQQ…TINE). Positions 1612 to 1625 (TNPLTSSTNNGNNS) are enriched in low complexity. A coiled-coil region spans residues 1632–1702 (LQQQHLQQVQ…NNNNNNNNNN (71 aa)). Residues 1665–1675 (SANTTPQLNSM) show a composition bias toward polar residues. Low complexity predominate over residues 1676–1723 (NPNSINYNNNNNNNNNNNNNNNNNNNNNNNNNNNNNNIINNNITTINE).

Its subcellular location is the nucleus. Its function is as follows. Putative transcription factor. This chain is Homeobox protein 5 (hbx5-1), found in Dictyostelium discoideum (Social amoeba).